Here is a 152-residue protein sequence, read N- to C-terminus: Transcriptional regulator MraZ (152 aa).

SpoVT-AbrB domains lie at 5–52 (ASAI…PIQE) and 81–124 (AHEC…DEAA).

The protein belongs to the MraZ family. Forms oligomers.

It localises to the cytoplasm. The protein resides in the nucleoid. The protein is Transcriptional regulator MraZ of Shewanella halifaxensis (strain HAW-EB4).